Here is a 557-residue protein sequence, read N- to C-terminus: MTDNNKYRDVEIRAPRGNKLTAKSWLTEAPLRMLMNNLDPQVAENPKELVVYGGIGRAARNWECYDKIVETLTRLEDDETLLVQSGKPVGVFKTHSNAPRVLIANSNLVPHWANWEHFNELDAKGLAMYGQMTAGSWIYIGSQGIVQGTYETFVEAGRQHYGGTVKAKWVLTAGLGGMGGAQPLAATLAGACSLNIECQQSRIDFRLETRYVDEQATDLDDALVRIAKYTAEGKAISIALHGNAAEILPELVKRGVRPDMVTDQTSAHDPLNGYLPAGWTWEQYRDRAQTEPAAVVKAAKQSMAVHVQAMLDFQKQGVPTFDYGNNIRQMAKEEGVANAFDFPGFVPAYIRPLFCRGVGPFRWAALSGEAEDIYKTDAKVKELIPDDAHLHRWLDMARERISFQGLPARICWVGLGLRAKLGLAFNEMVRSGELSAPVVIGRDHLDSGSVSSPNRETEAMRDGSDAVSDWPLLNALLNTAGGATWVSLHHGGGVGMGFSQHSGMVIVCDGTDEAAERIARVLTNDPGTGVMRHADAGYDIAIDCAKEQGLDLPMITG.

NAD(+) is bound by residues 53–54 (GG), glutamine 131, 177–179 (GMG), 197–202 (ECQQSR), 243–244 (NA), 264–268 (QTSAH), 274–275 (YL), and 323–324 (YG). Cysteine 411 is an active-site residue. NAD(+) contacts are provided by residues 455–456 (RE) and glycine 493.

In terms of assembly, homodimer. Requires NAD(+) as cofactor.

The protein resides in the cytoplasm. It catalyses the reaction 4-imidazolone-5-propanoate = trans-urocanate + H2O. Its pathway is amino-acid degradation; L-histidine degradation into L-glutamate; N-formimidoyl-L-glutamate from L-histidine: step 2/3. Catalyzes the conversion of urocanate to 4-imidazolone-5-propionate. This chain is Urocanate hydratase, found in Pseudomonas putida (Arthrobacter siderocapsulatus).